We begin with the raw amino-acid sequence, 113 residues long: Small ribosomal subunit protein bS18 (113 aa).

The interval 1–41 is disordered; that stretch reads MSEEKIVNTEAAPEAVAERPARAERSERPERPAKGPFGKKR. Residues 16–33 show a composition bias toward basic and acidic residues; sequence VAERPARAERSERPERPA.

It belongs to the bacterial ribosomal protein bS18 family. As to quaternary structure, part of the 30S ribosomal subunit. Forms a tight heterodimer with protein bS6.

Its function is as follows. Binds as a heterodimer with protein bS6 to the central domain of the 16S rRNA, where it helps stabilize the platform of the 30S subunit. The sequence is that of Small ribosomal subunit protein bS18 from Elusimicrobium minutum (strain Pei191).